Here is a 182-residue protein sequence, read N- to C-terminus: Adenine phosphoribosyltransferase (182 aa).

It belongs to the purine/pyrimidine phosphoribosyltransferase family. As to quaternary structure, homodimer.

The protein resides in the cytoplasm. The enzyme catalyses AMP + diphosphate = 5-phospho-alpha-D-ribose 1-diphosphate + adenine. It functions in the pathway purine metabolism; AMP biosynthesis via salvage pathway; AMP from adenine: step 1/1. Functionally, catalyzes a salvage reaction resulting in the formation of AMP, that is energically less costly than de novo synthesis. The chain is Adenine phosphoribosyltransferase from Shewanella frigidimarina (strain NCIMB 400).